A 532-amino-acid chain; its full sequence is Putative 57 kDa heat shock protein (532 aa).

SHSP domains follow at residues Val-25–Thr-134 and Ser-439–Asn-532.

The protein belongs to the small heat shock protein (HSP20) family.

The sequence is that of Putative 57 kDa heat shock protein from Arabidopsis thaliana (Mouse-ear cress).